The primary structure comprises 83 residues: Transmembrane protein EP84R (83 aa).

2 helical membrane passes run 31–51 (IIGV…IIIL) and 59–79 (TGSI…FLIY).

Belongs to the asfivirus EP84R family.

It is found in the virion membrane. The sequence is that of Transmembrane protein EP84R from Ornithodoros (relapsing fever ticks).